Here is a 299-residue protein sequence, read N- to C-terminus: Endonuclease 4 (299 aa).

The signal sequence occupies residues 1–24 (MSSSLRQWFARVLVLTQLINGALC). A divalent metal cation is bound by residues tryptophan 25 and histidine 30. 25 to 30 (WGKEGH) provides a ligand contact to substrate. A disulfide bridge links cysteine 34 with cysteine 65. A divalent metal cation contacts are provided by aspartate 69 and histidine 84. Residues 69-75 (DEIKHHW), 84-87 (HYVD), and 94-99 (NYEYCR) contribute to the substrate site. Cystine bridges form between cysteine 93-cysteine 246, cysteine 101-cysteine 111, and cysteine 226-cysteine 233. Positions 118 and 136 each coordinate substrate. An N-linked (GlcNAc...) asparagine glycan is attached at asparagine 118. Residue asparagine 137 is glycosylated (N-linked (GlcNAc...) asparagine). A divalent metal cation is bound by residues histidine 147, aspartate 151, histidine 157, histidine 181, and aspartate 185. The substrate binding stretch occupies residues 147–196 (HFIGDIHQPLHVGFLGDEGGNTITVRWYRRKTNLHHVWDNMIIESALKTY). Residues asparagine 198, asparagine 211, and asparagine 229 are each glycosylated (N-linked (GlcNAc...) asparagine). The propeptide at 284-299 (ATLNRIFSSKPKHAGS) is removed in mature form.

The protein belongs to the nuclease type I family. In terms of assembly, monomer. Mn(2+) serves as cofactor. Requires Ca(2+) as cofactor.

The catalysed reaction is Endonucleolytic cleavage to 5'-phosphomononucleotide and 5'-phosphooligonucleotide end-products.. Endonuclease that can use single-stranded RNA and DNA as substrates. In contradiction with PubMed:23620482, cannot hydrolyze single-stranded DNA and does not cleave mismatches. This chain is Endonuclease 4, found in Arabidopsis thaliana (Mouse-ear cress).